The following is a 198-amino-acid chain: FMN-dependent NADH:quinone oxidoreductase (198 aa).

FMN contacts are provided by residues serine 10, 16–18, 94–97, and 138–141; these read SQS, MYNF, and TRGG.

Belongs to the azoreductase type 1 family. Homodimer. It depends on FMN as a cofactor.

It catalyses the reaction 2 a quinone + NADH + H(+) = 2 a 1,4-benzosemiquinone + NAD(+). The enzyme catalyses N,N-dimethyl-1,4-phenylenediamine + anthranilate + 2 NAD(+) = 2-(4-dimethylaminophenyl)diazenylbenzoate + 2 NADH + 2 H(+). In terms of biological role, quinone reductase that provides resistance to thiol-specific stress caused by electrophilic quinones. Its function is as follows. Also exhibits azoreductase activity. Catalyzes the reductive cleavage of the azo bond in aromatic azo compounds to the corresponding amines. In Shewanella putrefaciens (strain CN-32 / ATCC BAA-453), this protein is FMN-dependent NADH:quinone oxidoreductase.